The following is a 416-amino-acid chain: Cytochrome P450 monooxygenase PikC (416 aa).

Substrate contacts are provided by residues Glu-94, 187-191 (AQTAM), and 238-246 (HILLVAGHE). Residue Cys-354 participates in heme binding.

It belongs to the cytochrome P450 family. The cofactor is heme.

It catalyses the reaction narbomycin + 2 reduced [2Fe-2S]-[ferredoxin] + O2 + 2 H(+) = pikromycin + 2 oxidized [2Fe-2S]-[ferredoxin] + H2O. The enzyme catalyses narbomycin + 2 reduced [2Fe-2S]-[ferredoxin] + O2 + 2 H(+) = neopikromycin + 2 oxidized [2Fe-2S]-[ferredoxin] + H2O. It carries out the reaction narbomycin + 4 reduced [2Fe-2S]-[ferredoxin] + 2 O2 + 4 H(+) = novapikromycin + 4 oxidized [2Fe-2S]-[ferredoxin] + 2 H2O. The catalysed reaction is 10-deoxymethymycin + 2 reduced [2Fe-2S]-[ferredoxin] + O2 + 2 H(+) = methymycin + 2 oxidized [2Fe-2S]-[ferredoxin] + H2O. It catalyses the reaction 10-deoxymethymycin + 2 reduced [2Fe-2S]-[ferredoxin] + O2 + 2 H(+) = neomethymycin + 2 oxidized [2Fe-2S]-[ferredoxin] + H2O. The enzyme catalyses 10-deoxymethymycin + 4 reduced [2Fe-2S]-[ferredoxin] + 2 O2 + 4 H(+) = novamethymycin + 4 oxidized [2Fe-2S]-[ferredoxin] + 2 H2O. It participates in antibiotic biosynthesis. Its function is as follows. Catalyzes the hydroxylation of narbomycin to give rise to pikromycin, and of 10-deoxymethymycin (YC-17) to give rise to methymycin and neomethymycin during macrolide antibiotic biosynthesis. In addition, produces low amounts of neopicromycin, novapikromycin and novamethymycin. Requires the participation of a ferredoxin and a ferredoxin reductase for the transfer of electrons from NADPH to the monooxygenase. This chain is Cytochrome P450 monooxygenase PikC, found in Streptomyces venezuelae.